The sequence spans 214 residues: 3,4-dihydroxy-2-butanone 4-phosphate synthase (214 aa).

D-ribulose 5-phosphate-binding positions include 37-38, Asp-42, 150-154, and Glu-174; these read RE and RRGHT. Glu-38 is a binding site for Mg(2+). Residue His-153 coordinates Mg(2+).

The protein belongs to the DHBP synthase family. Homodimer. The cofactor is Mg(2+). Requires Mn(2+) as cofactor.

The catalysed reaction is D-ribulose 5-phosphate = (2S)-2-hydroxy-3-oxobutyl phosphate + formate + H(+). It participates in cofactor biosynthesis; riboflavin biosynthesis; 2-hydroxy-3-oxobutyl phosphate from D-ribulose 5-phosphate: step 1/1. Functionally, catalyzes the conversion of D-ribulose 5-phosphate to formate and 3,4-dihydroxy-2-butanone 4-phosphate. The polypeptide is 3,4-dihydroxy-2-butanone 4-phosphate synthase (Pasteurella multocida (strain Pm70)).